Consider the following 147-residue polypeptide: Transcription antitermination protein NusB (147 aa).

Belongs to the NusB family.

In terms of biological role, involved in transcription antitermination. Required for transcription of ribosomal RNA (rRNA) genes. Binds specifically to the boxA antiterminator sequence of the ribosomal RNA (rrn) operons. This Legionella pneumophila (strain Paris) protein is Transcription antitermination protein NusB.